Here is a 395-residue protein sequence, read N- to C-terminus: Forkhead box protein I3 (395 aa).

The segment at residues 131–225 is a DNA-binding region (fork-head); the sequence is RPPYSYSALI…DNGNFRRKRK (95 aa). 2 disordered regions span residues 216-288 and 322-370; these read DNGN…GIIS and RNFS…SSGS. A Nuclear localization signal motif is present at residues 221–227; that stretch reads RRKRKRR. Residues 234 to 245 show a composition bias toward low complexity; that stretch reads ATTAAASSLGGL. Residues 325–335 show a composition bias toward polar residues; it reads SAGQLSGGTFT. Positions 336–349 are enriched in low complexity; that stretch reads PSSSSSQEVPSPEQ.

In terms of tissue distribution, initially expressed in the pre-placodal ectoderm surrounding the neural plate, which will give rise to all craniofacial sensory organs. Expression then becomes restricted to a region immediately anterior to the first pair of somites that will give rise to the otic and epibranchial placodes, before becoming down-regulated from this region and restricted to the ectoderm and endoderm of the pharyngeal arches.

The protein resides in the nucleus. Transcription factor required for pharyngeal arch development, which is involved in otic placode development. This chain is Forkhead box protein I3, found in Gallus gallus (Chicken).